Here is a 260-residue protein sequence, read N- to C-terminus: Factor V activator RVV-V gamma (260 aa).

An N-terminal signal peptide occupies residues 1-18 (MVLIKVLANLLVLQLSYA). A propeptide spanning residues 19–24 (QKSSEL) is cleaved from the precursor. In terms of domain architecture, Peptidase S1 spans 25–251 (VVGGDECNIN…YNNWIQSIIA (227 aa)). Intrachain disulfides connect Cys31/Cys165, Cys52/Cys68, Cys100/Cys258, Cys144/Cys212, Cys176/Cys191, and Cys202/Cys227. Residues His67 and Asp112 each act as charge relay system in the active site. The active-site Charge relay system is Ser206. Residue Asn253 is glycosylated (N-linked (GlcNAc...) asparagine).

This sequence belongs to the peptidase S1 family. Snake venom subfamily. As to quaternary structure, monomer. In terms of tissue distribution, expressed by the venom gland.

It localises to the secreted. The catalysed reaction is Fully activates human clotting factor V by a single cleavage at the 1545-Trp-Tyr-Leu-Arg-|-Ser-Asn-Asn-Gly-1552 bond. Cattle, but not rabbit, factor V is cleaved, and no other proteins of the clotting system are attacked. Esterase activity is observed on Bz-Arg-OEt and Tos-Arg-OMe, and amidase activity on Phe-pipecolyl-Arg-NHPhNO2.. In terms of biological role, venom serine protease that selectively activates factor V (F5) in a calcium-independent manner. It cleaves the Arg(1545)-Ser(1546) linkage in the human factor V molecule. Induces the coagulation of mammalian plasma. The sequence is that of Factor V activator RVV-V gamma from Daboia siamensis (Eastern Russel's viper).